The chain runs to 26 residues: Turripeptide OL49 (26 aa).

Post-translationally, contains 3 disulfide bonds. As to expression, expressed by the venom duct.

The protein localises to the secreted. Acts as a neurotoxin by inhibiting an ion channel. The protein is Turripeptide OL49 of Iotyrris olangoensis (Sea snail).